Here is a 2169-residue protein sequence, read N- to C-terminus: Voltage-dependent L-type calcium channel subunit alpha-1C (2169 aa).

Over 1-153 (MVPLVQPTTP…RACISIVEWK (153 aa)) the chain is Cytoplasmic. Residues 76 to 97 (GAALSWQAAIDAGRQAKLMGSA) form a calmodulin-binding region. A compositionally biased stretch (polar residues) spans 98–108 (GNTTISTVSST). The tract at residues 98 to 127 (GNTTISTVSSTQRKRQQYGKPKKQSGTTAT) is disordered. A compositionally biased stretch (basic residues) spans 109-120 (QRKRQQYGKPKK). The stretch at 140 to 437 (NPIRRACISI…LVLGVLSGEF (298 aa)) is one I repeat. Residues 154–172 (PFEIIILLTIFANCVALAI) form a helical membrane-spanning segment. Over 173–187 (YIPFPEDDSNATNSN) the chain is Extracellular. N-linked (GlcNAc...) asparagine glycosylation is present at N182. A helical membrane pass occupies residues 188 to 208 (LERVEYLFLIIFTVEAFLKVI). Topologically, residues 209–217 (AYGLLFHPN) are cytoplasmic. A helical transmembrane segment spans residues 218 to 238 (AYLRNGWNLLDFIIVVVGLFS). The Extracellular segment spans residues 239-261 (AILEQATKADGANALGGKGAGFD). Residues 262 to 280 (VKALRAFRVLRPLRLVSGV) traverse the membrane as a helical segment. The Cytoplasmic portion of the chain corresponds to 281–297 (PSLQVVLNSIIKAMVPL). A helical transmembrane segment spans residues 298–319 (LHTALLVLFVIIIYAIIGLELF). Residues 320–379 (MGKMHKTCYNQEGITDVPAEEDPSPCALESGHGRQCQNGTVCKPGWDGPKHGITNFDNFA) are Extracellular-facing. C345 and C361 are disulfide-bonded. Residue N357 is glycosylated (N-linked (GlcNAc...) asparagine). The segment at residues 380 to 401 (FAMLTVFQCITMEGWTDVLYWM) is an intramembrane region (pore-forming). A Selectivity filter of repeat I motif is present at residues 390-393 (TMEG). A Ca(2+)-binding site is contributed by E392. The Extracellular portion of the chain corresponds to 402-409 (QDAMGYEL). The chain crosses the membrane as a helical span at residues 410–430 (PWVYFVSLVIFGSFFVLNLVL). Residues 431-553 (GVLSGEFSKE…RKCRAAVKSN (123 aa)) lie on the Cytoplasmic side of the membrane. The tract at residues 457–474 (QQLEEDLKGYLDWITQAE) is AID/alpha-interaction domain; mediates interaction with the beta subunit. The tract at residues 478–510 (PENEDEGVDEEKPRNMSMPTSETESVNTENVAG) is disordered. A compositionally biased stretch (polar residues) spans 494–507 (SMPTSETESVNTEN). S498 carries the post-translational modification Phosphoserine. Position 505 is a phosphothreonine (T505). One copy of the II repeat lies at 539 to 785 (NRFCRRKCRA…VFLAIAVDNL (247 aa)). A helical transmembrane segment spans residues 554 to 572 (VFYWLVIFLVFLNTLTIAS). At 573 to 583 (EHYNQPHWLTE) the chain is on the extracellular side. The helical transmembrane segment at 584 to 604 (VQDTANKALLALFTAEMLLKM) threads the bilayer. Residues 605 to 615 (YSLGLQAYFVS) lie on the Cytoplasmic side of the membrane. The chain crosses the membrane as a helical span at residues 616–635 (LFNRLDCFIVCGGILETILV). Residues 636 to 644 (ETKIMSPLG) are Extracellular-facing. Residues 645 to 663 (ISVLRCVRLLRIFKITRYW) traverse the membrane as a helical segment. Topologically, residues 664 to 682 (NSLSNLVASLLNSVRSIAS) are cytoplasmic. The chain crosses the membrane as a helical span at residues 683 to 702 (LLLLLFLFIIIFSLLGMQLF). The Extracellular portion of the chain corresponds to 703-722 (GGKFNFDEMRTRRSTFDNFP). The pore-forming intramembrane region spans 723-744 (QSLLTVFQILTGEDWNSVMYDG). Positions 733–736 (TGED) match the Selectivity filter of repeat II motif. A Ca(2+)-binding site is contributed by E735. The Extracellular segment spans residues 745 to 754 (IMAYGGPSFP). Residues 755–774 (GMLVCIYFIILFICGNYILL) traverse the membrane as a helical segment. The Cytoplasmic portion of the chain corresponds to 775–929 (NVFLAIAVDN…LQCHRIVNDT (155 aa)). The interval 793-890 (SAQKEEEEEK…EMPVGPRPRP (98 aa)) is disordered. Over residues 812 to 835 (SPEKKQEVVEKPAVEETKEEKIEL) the composition is skewed to basic and acidic residues. Residues S837 and S844 each carry the phosphoserine modification. Positions 858-905 (NENEDKSPYPNPDAAGEEDEEEPEMPVGPRPRPLSELHLKEKAVPMPE) are interaction with STAC2. Over residues 872-881 (AGEEDEEEPE) the composition is skewed to acidic residues. The III repeat unit spans residues 916 to 1198 (NRFRLQCHRI…IFVGFVIVTF (283 aa)). Residues 930 to 948 (IFTNLILFFILLSSISLAA) traverse the membrane as a helical segment. The Extracellular portion of the chain corresponds to 949–960 (EDPVQHTSFRNH). A helical transmembrane segment spans residues 961 to 980 (ILFYFDIVFTTIFTIEIALK). The Cytoplasmic segment spans residues 981 to 996 (MTAYGAFLHKGSFCRN). The chain crosses the membrane as a helical span at residues 997–1015 (YFNILDLLVVSVSLISFGI). The Extracellular segment spans residues 1016 to 1022 (QSSAINV). A helical membrane pass occupies residues 1023–1041 (VKILRVLRVLRPLRAINRA). At 1042 to 1060 (KGLKHVVQCVFVAIRTIGN) the chain is on the cytoplasmic side. A helical transmembrane segment spans residues 1061 to 1080 (IVIVTTLLQFMFACIGVQLF). Topologically, residues 1081 to 1130 (KGKLYTCSDSSKQTEAECKGNYITYKDGEVDQPIIQPRSWENSKFDFDNV) are extracellular. C1087 and C1098 are joined by a disulfide. The dihydropyridine binding stretch occupies residues 1118–1207 (RSWENSKFDF…FQEQGEQEYK (90 aa)). Positions 1131–1151 (LAAMMALFTVSTFEGWPELLY) form an intramembrane region, pore-forming. Residues 1142–1145 (TFEG) carry the Selectivity filter of repeat III motif. Position 1144 (E1144) interacts with Ca(2+). Over 1152-1168 (RSIDSHTEDKGPIYNYR) the chain is Extracellular. The helical transmembrane segment at 1169-1190 (VEISIFFIIYIIIIAFFMMNIF) threads the bilayer. Residues 1191–1248 (VGFVIVTFQEQGEQEYKNCELDKNQRQCVEYALKARPLRRYIPKNQHQYKVWYVVNST) lie on the Cytoplasmic side of the membrane. An IV repeat occupies 1235-1508 (NQHQYKVWYV…LFVAVVMDNF (274 aa)). The helical transmembrane segment at 1249-1270 (YFEYLMFVLILLNTICLAMQHY) threads the bilayer. Residues 1271 to 1278 (GQSCLFKI) are Extracellular-facing. A helical membrane pass occupies residues 1279–1300 (AMNILNMLFTGLFTVEMILKLI). The Cytoplasmic segment spans residues 1301-1310 (AFKPKHYFCD). A helical transmembrane segment spans residues 1311–1330 (AWNTFDALIVVGSIVDIAIT). Topologically, residues 1331-1353 (EVNPAEHTQCSPSMNAEENSRIS) are extracellular. A helical membrane pass occupies residues 1354–1372 (ITFFRLFRVMRLVKLLSRG). At 1373–1390 (EGIRTLLWTFIKSFQALP) the chain is on the cytoplasmic side. A helical transmembrane segment spans residues 1391–1411 (YVALLIVMLFFIYAVIGMQVF). The Extracellular portion of the chain corresponds to 1412-1433 (GKIALNDTTEINRNNNFQTFPQ). N1417 carries an N-linked (GlcNAc...) asparagine glycan. Positions 1434–1452 (AVLLLFRCATGEAWQDIML) form an intramembrane region, pore-forming. Positions 1443–1446 (TGEA) match the Selectivity filter of repeat IV motif. Topologically, residues 1453–1480 (ACMPGKKCAPESDPSNSTEGETPCGSSF) are extracellular. The segment at 1459–1527 (KCAPESDPSN…LGPHHLDEFK (69 aa)) is dihydropyridine binding. Cysteines 1460 and 1476 form a disulfide. The N-linked (GlcNAc...) asparagine glycan is linked to N1468. Positions 1473 to 1515 (ETPCGSSFAVFYFISFYMLCAFLIINLFVAVVMDNFDYLTRDW) are phenylalkylamine binding. Residues 1481-1505 (AVFYFISFYMLCAFLIINLFVAVVM) traverse the membrane as a helical segment. Residues 1506-2169 (DNFDYLTRDW…ADSRVHVRSL (664 aa)) lie on the Cytoplasmic side of the membrane. The interval 1640 to 1667 (DEVTVGKFYATFLIQEYFRKFKKRKEQG) is important for interaction with STAC1, STAC2 and STAC3. Residues 1646–1666 (KFYATFLIQEYFRKFKKRKEQ) form a calmodulin-binding IQ region region. Positions 1680-1699 (LQAGLRTLHDIGPEIRRAIS) are important for localization in at the junctional membrane. A phosphoserine mark is found at S1699 and S1720. Disordered stretches follow at residues 1761-1793 (KAGNNQGDTESPSHEKLVDSTFTPSSYSSTGSN) and 1894-1920 (ENRQLTPPEEDKGDTRPSPKKGFLRSA). The segment covering 1780–1792 (STFTPSSYSSTGS) has biased composition (polar residues). The segment covering 1894–1910 (ENRQLTPPEEDKGDTRP) has biased composition (basic and acidic residues). S1927 is subject to Phosphoserine.

This sequence belongs to the calcium channel alpha-1 subunit (TC 1.A.1.11) family. CACNA1C subfamily. In terms of assembly, component of a calcium channel complex consisting of a pore-forming alpha subunit (CACNA1C) and ancillary beta, gamma and delta subunits. The channel complex contains alpha, beta, gamma and delta subunits in a 1:1:1:1 ratio, i.e. it contains only one of each type of subunit. CACNA1C channel activity is modulated by ancillary subunits, such as CACNB1, CACNB2, CACNB3, CACNA2D1 and CACNA2D4. Interacts with CACNB1. Interacts with CACNB2. Identified in a complex with CACNA2D4 and CACNB3. Interacts with CACNB3. Interacts with CACNA2D1. Interacts with CACNA2D4. Interacts with the gamma subunits CACNG4, CACNG6, CACNG7 and CACNG8. Interacts with CALM1. Interacts (via the N-terminus and the C-terminal C and IQ motifs) with CABP1; this inhibits Ca(2+)-dependent channel inactivation. The binding via the C motif is calcium independent whereas the binding via IQ requires the presence of calcium and is mutually exclusive with calmodulin binding. The binding to the cytoplasmic N-terminal domain is calcium independent but is essential for the channel modulation. Interacts (via C-terminal CDB motif) with CABP5; in a calcium-dependent manner. Interacts with CIB1; the interaction increases upon cardiomyocytes hypertrophy. Interacts with STAC2 and STAC3; this inhibits channel inactivation. In terms of processing, phosphorylation by PKA at Ser-1927 activates the channel. Elevated levels of blood glucose lead to increased phosphorylation by PKA. Expressed in heart. Expressed in uterus.

The protein resides in the cell membrane. The protein localises to the sarcolemma. Its subcellular location is the perikaryon. It is found in the postsynaptic density membrane. It localises to the cell projection. The protein resides in the dendrite. The protein localises to the T-tubule. It carries out the reaction Ca(2+)(in) = Ca(2+)(out). Inhibited by dihydropyridines (DHP), such as isradipine. Inhibited by nifedipine. Channel activity is regulated by Ca(2+) and calmodulin. Binding of STAC1, STAC2 or STAC3 to a region that overlaps with the calmodulin binding site inhibits channel inactivation by Ca(2+) and calmodulin. Binding of calmodulin or CABP1 at the same regulatory sites results in opposite effects on the channel function. Shear stress and pressure increases calcium channel activity. Functionally, pore-forming, alpha-1C subunit of the voltage-gated calcium channel that gives rise to L-type calcium currents. Mediates influx of calcium ions into the cytoplasm, and thereby triggers calcium release from the sarcoplasm. Plays an important role in excitation-contraction coupling in the heart. Required for normal heart development and normal regulation of heart rhythm. Required for normal contraction of smooth muscle cells in blood vessels and in the intestine. Essential for normal blood pressure regulation via its role in the contraction of arterial smooth muscle cells. Long-lasting (L-type) calcium channels belong to the 'high-voltage activated' (HVA) group. This Cavia porcellus (Guinea pig) protein is Voltage-dependent L-type calcium channel subunit alpha-1C (CACNA1C).